A 340-amino-acid chain; its full sequence is Phosphoribosylformylglycinamidine cyclo-ligase (340 aa).

The protein belongs to the AIR synthase family.

It localises to the cytoplasm. It carries out the reaction 2-formamido-N(1)-(5-O-phospho-beta-D-ribosyl)acetamidine + ATP = 5-amino-1-(5-phospho-beta-D-ribosyl)imidazole + ADP + phosphate + H(+). It functions in the pathway purine metabolism; IMP biosynthesis via de novo pathway; 5-amino-1-(5-phospho-D-ribosyl)imidazole from N(2)-formyl-N(1)-(5-phospho-D-ribosyl)glycinamide: step 2/2. The sequence is that of Phosphoribosylformylglycinamidine cyclo-ligase from Streptococcus pneumoniae (strain CGSP14).